Reading from the N-terminus, the 296-residue chain is MSLKPYATPTYWQRVKVAFQYIFPQLPVTRLAGWLAEQKWGAVTHFIIRTFAKQYKVNLSEAQKSNASDYATFNEFFIRPLKENARPINQDAQALCLPADGKVSESGKIEDDRLLQAKGHFFTLETLLANDQEMANKFKDGHFITTYLSPRDYHRVHMPCDATLRKMIYVPGELFSVNPFLAEHVPNLFARNERVICEFETEFGPMVQILVGATITASMSTVWAGIINPPRTKEVVEYHYETSGETAVHLKKGQEMGAFRLGSTVINLFPKDSVEFEAHLQAGVETRMGERLAKIK.

Residues Asp100, His157, and Ser263 each act as charge relay system; for autoendoproteolytic cleavage activity in the active site. Ser263 functions as the Schiff-base intermediate with substrate; via pyruvic acid; for decarboxylase activity in the catalytic mechanism. Ser263 bears the Pyruvic acid (Ser); by autocatalysis mark.

This sequence belongs to the phosphatidylserine decarboxylase family. PSD-B subfamily. Prokaryotic type I sub-subfamily. In terms of assembly, heterodimer of a large membrane-associated beta subunit and a small pyruvoyl-containing alpha subunit. It depends on pyruvate as a cofactor. In terms of processing, is synthesized initially as an inactive proenzyme. Formation of the active enzyme involves a self-maturation process in which the active site pyruvoyl group is generated from an internal serine residue via an autocatalytic post-translational modification. Two non-identical subunits are generated from the proenzyme in this reaction, and the pyruvate is formed at the N-terminus of the alpha chain, which is derived from the carboxyl end of the proenzyme. The autoendoproteolytic cleavage occurs by a canonical serine protease mechanism, in which the side chain hydroxyl group of the serine supplies its oxygen atom to form the C-terminus of the beta chain, while the remainder of the serine residue undergoes an oxidative deamination to produce ammonia and the pyruvoyl prosthetic group on the alpha chain. During this reaction, the Ser that is part of the protease active site of the proenzyme becomes the pyruvoyl prosthetic group, which constitutes an essential element of the active site of the mature decarboxylase.

The protein localises to the cell membrane. The enzyme catalyses a 1,2-diacyl-sn-glycero-3-phospho-L-serine + H(+) = a 1,2-diacyl-sn-glycero-3-phosphoethanolamine + CO2. It participates in phospholipid metabolism; phosphatidylethanolamine biosynthesis; phosphatidylethanolamine from CDP-diacylglycerol: step 2/2. Catalyzes the formation of phosphatidylethanolamine (PtdEtn) from phosphatidylserine (PtdSer). In Actinobacillus pleuropneumoniae serotype 7 (strain AP76), this protein is Phosphatidylserine decarboxylase proenzyme.